We begin with the raw amino-acid sequence, 517 residues long: Acetylcholine receptor subunit delta (517 aa).

Residues 1 to 21 form the signal peptide; that stretch reads MAGPVPTLGLLAALVVCGSWG. Topologically, residues 22-245 are extracellular; the sequence is LNEEQRLIQH…VTFYLIIRRK (224 aa). Asn-97, Asn-164, and Asn-190 each carry an N-linked (GlcNAc...) asparagine glycan. Cys-151 and Cys-165 are disulfide-bonded. Helical transmembrane passes span 246 to 270, 278 to 296, and 312 to 333; these read PLFYIINILVPCVLISFMINLVFYL, TSVAISVLLAQSVFLLLIS, and FLLFGMVLVTMVVVICVIVLNI. Over 334-471 the chain is Cytoplasmic; it reads HFRTPSTHVL…WNQVARTVDR (138 aa). Phosphotyrosine; by Tyr-kinases is present on Tyr-390. Residues 472 to 490 traverse the membrane as a helical segment; it reads LCLFVVTPVMVVGTAWIFL.

It belongs to the ligand-gated ion channel (TC 1.A.9) family. Acetylcholine receptor (TC 1.A.9.1) subfamily. Delta/CHRND sub-subfamily. As to quaternary structure, pentamer of two alpha chains, and one each of the beta, delta, and gamma (in immature muscle) or epsilon (in mature muscle) chains. The muscle heteropentamer composed of alpha-1, beta-1, delta, epsilon subunits interacts with the alpha-conotoxin ImII.

The protein resides in the postsynaptic cell membrane. It localises to the cell membrane. The catalysed reaction is K(+)(in) = K(+)(out). It carries out the reaction Na(+)(in) = Na(+)(out). Its function is as follows. After binding acetylcholine, the AChR responds by an extensive change in conformation that affects all subunits and leads to opening of an ion-conducting channel across the plasma membrane. The protein is Acetylcholine receptor subunit delta (Chrnd) of Rattus norvegicus (Rat).